The sequence spans 299 residues: NAD kinase 1 (299 aa).

Asp62 acts as the Proton acceptor in catalysis. NAD(+)-binding positions include 62-63 (DG), Lys67, 143-144 (ND), Lys173, and Asp175.

The protein belongs to the NAD kinase family. A divalent metal cation is required as a cofactor.

Its subcellular location is the cytoplasm. The catalysed reaction is NAD(+) + ATP = ADP + NADP(+) + H(+). Functionally, involved in the regulation of the intracellular balance of NAD and NADP, and is a key enzyme in the biosynthesis of NADP. Catalyzes specifically the phosphorylation on 2'-hydroxyl of the adenosine moiety of NAD to yield NADP. This chain is NAD kinase 1, found in Prochlorococcus marinus subsp. pastoris (strain CCMP1986 / NIES-2087 / MED4).